The sequence spans 353 residues: Photosystem II protein D1 (353 aa).

Position 2 is an N-acetylthreonine (threonine 2). Position 2 is a phosphothreonine (threonine 2). A run of 3 helical transmembrane segments spans residues 29–46, 118–133, and 142–156; these read YIGWFGVLMIPTLLTATS, HFLLGVACYMGREWEL, and WIAVAYSAPVAAATA. Histidine 118 lines the chlorophyll a pocket. Residue tyrosine 126 participates in pheophytin a binding. Residues aspartate 170 and glutamate 189 each coordinate [CaMn4O5] cluster. The chain crosses the membrane as a helical span at residues 197 to 218; the sequence is FHMLGVAGVFGGSLFSAMHGSL. Position 198 (histidine 198) interacts with chlorophyll a. A quinone-binding positions include histidine 215 and 264-265; that span reads SF. Histidine 215 contacts Fe cation. Histidine 272 lines the Fe cation pocket. A helical transmembrane segment spans residues 274–288; that stretch reads FLAAWPVVGIWFTAL. Residues histidine 332, glutamate 333, aspartate 342, and alanine 344 each contribute to the [CaMn4O5] cluster site. Residues 345 to 353 constitute a propeptide that is removed on maturation; that stretch reads AVEAPAVNG.

Belongs to the reaction center PufL/M/PsbA/D family. PSII is composed of 1 copy each of membrane proteins PsbA, PsbB, PsbC, PsbD, PsbE, PsbF, PsbH, PsbI, PsbJ, PsbK, PsbL, PsbM, PsbT, PsbX, PsbY, PsbZ, Psb30/Ycf12, at least 3 peripheral proteins of the oxygen-evolving complex and a large number of cofactors. It forms dimeric complexes. The D1/D2 heterodimer binds P680, chlorophylls that are the primary electron donor of PSII, and subsequent electron acceptors. It shares a non-heme iron and each subunit binds pheophytin, quinone, additional chlorophylls, carotenoids and lipids. D1 provides most of the ligands for the Mn4-Ca-O5 cluster of the oxygen-evolving complex (OEC). There is also a Cl(-1) ion associated with D1 and D2, which is required for oxygen evolution. The PSII complex binds additional chlorophylls, carotenoids and specific lipids. is required as a cofactor. In terms of processing, tyr-161 forms a radical intermediate that is referred to as redox-active TyrZ, YZ or Y-Z. C-terminally processed by CTPA; processing is essential to allow assembly of the oxygen-evolving complex and thus photosynthetic growth.

The protein localises to the plastid. It localises to the chloroplast thylakoid membrane. It carries out the reaction 2 a plastoquinone + 4 hnu + 2 H2O = 2 a plastoquinol + O2. Photosystem II (PSII) is a light-driven water:plastoquinone oxidoreductase that uses light energy to abstract electrons from H(2)O, generating O(2) and a proton gradient subsequently used for ATP formation. It consists of a core antenna complex that captures photons, and an electron transfer chain that converts photonic excitation into a charge separation. The D1/D2 (PsbA/PsbD) reaction center heterodimer binds P680, the primary electron donor of PSII as well as several subsequent electron acceptors. This Marchantia polymorpha (Common liverwort) protein is Photosystem II protein D1.